A 365-amino-acid polypeptide reads, in one-letter code: DNA replication and repair protein RecF (365 aa).

30–37 serves as a coordination point for ATP; it reads GDNAQGKT.

Belongs to the RecF family.

The protein localises to the cytoplasm. The RecF protein is involved in DNA metabolism; it is required for DNA replication and normal SOS inducibility. RecF binds preferentially to single-stranded, linear DNA. It also seems to bind ATP. The chain is DNA replication and repair protein RecF from Alkaliphilus oremlandii (strain OhILAs) (Clostridium oremlandii (strain OhILAs)).